A 227-amino-acid chain; its full sequence is DNA packaging ATPase P9 (227 aa).

16–23 (GKTGTGKT) contributes to the ATP binding site.

In terms of assembly, heterodimer of P6 and P9; further multimerizes as hexamers of heterodimers. Part of the dodecameric portal complex that is composed of the packaging efficiency factor P6, the DNA packaging ATPase P9, and the internal heterododecamer P20/P22 which spans the virion inner membrane.

Its subcellular location is the virion. Together with the packaging efficiency factor P6, forms the external part of the portal vertex that is embeded in the capsid and which plays critical roles in genome packaging and genome ejection. Both proteins multimerize as a single ring-shaped heterdodecamer arranged around a central channel. The sequence is that of DNA packaging ATPase P9 (IX) from Enterobacteria phage PRD1 (Bacteriophage PRD1).